Consider the following 397-residue polypeptide: L-aspartate--L-methionine ligase (397 aa).

The ATP-grasp domain maps to 131–347; that stretch reads VALNNKARIP…FFNTILKYVK (217 aa). ADP contacts are provided by K136, V171, K173, G183, V186, I188, E215, Q216, I218, N223, and T246. A Mg(2+)-binding site is contributed by D288. Residues L290 and I300 each coordinate ADP. D301 is a Mg(2+) binding site. R305 (critical for catalysis) is an active-site residue.

As to quaternary structure, primarily a monomer in solution. Minor homodimer formation. The cofactor is Mg(2+).

The enzyme catalyses L-aspartate + L-methionine + ATP = L-aspartyl-L-methionine + ADP + phosphate + H(+). It participates in amino-acid metabolism. L-amino acid ligase, which preferentially catalyzes the formation of L-aspartyl-L-methionine dipeptide from L-aspartate and L-methionine in the presence of ATP. Less active with L-asparagine and L-methionine as substrates. Less active with L-aspartate and either L-phenylalanine, L-valine, L-leucine or L-isoleucine as substrates. Decreased activity when L-methionine is substituted with seleno-DL-methionine, L-homocysteine, L-methionine sulfoxide, L-methionine sulfoximine and o-acetyl-L-serine. Decreased activity with acetylation of L-methionine amino group. Decreased activity by modification of L-methionine carboxylate to L-methionine methyl ester. No activity when L-methionine is substituted with L-homoserine. No activity with formylation of L-methionine amino group. No activity by modification of L-methionine carboxylate to L-methionine-glycine carboxylate. No activity when L-aspartate substrate is replaced by analogs such as L-homoserine, DL-aspartate beta-methyl ester, L-glutamate or o-acetyl-L-serine. No activity when L-aspartate amino and alpha-carboxylate groups are modified to L-malate, glycine-L-aspartate, L-aspartate-glycine or N-carbamoyl-DL-aspartate. No activity with L-methionine or L-aspartate as sole substrates. No activity in presence of other nucleoside triphosphates including GTP, CTP, UTP, TTP or ITP. Involved in sulfur amino acid metabolism. The chain is L-aspartate--L-methionine ligase from Staphylococcus aureus (strain NCTC 8325 / PS 47).